Consider the following 149-residue polypeptide: SsrA-binding protein (149 aa).

The protein belongs to the SmpB family.

Its subcellular location is the cytoplasm. Required for rescue of stalled ribosomes mediated by trans-translation. Binds to transfer-messenger RNA (tmRNA), required for stable association of tmRNA with ribosomes. tmRNA and SmpB together mimic tRNA shape, replacing the anticodon stem-loop with SmpB. tmRNA is encoded by the ssrA gene; the 2 termini fold to resemble tRNA(Ala) and it encodes a 'tag peptide', a short internal open reading frame. During trans-translation Ala-aminoacylated tmRNA acts like a tRNA, entering the A-site of stalled ribosomes, displacing the stalled mRNA. The ribosome then switches to translate the ORF on the tmRNA; the nascent peptide is terminated with the 'tag peptide' encoded by the tmRNA and targeted for degradation. The ribosome is freed to recommence translation, which seems to be the essential function of trans-translation. This Anaplasma phagocytophilum (strain HZ) protein is SsrA-binding protein.